A 315-amino-acid polypeptide reads, in one-letter code: Oxalate oxidoreductase subunit delta (315 aa).

2 4Fe-4S ferredoxin-type domains span residues 252 to 280 and 281 to 310; these read QRPIIDREACTECYTCWIYCPDSCITRTE and EGPVFNMKYCKGCGLCTAVCPSGALTNVPE. 8 residues coordinate [4Fe-4S] cluster: C261, C264, C267, C271, C290, C293, C296, and C300.

As to quaternary structure, dimer of heterotrimer of one alpha, one beta and one delta subunit. [4Fe-4S] cluster is required as a cofactor.

The catalysed reaction is oxidized 2[4Fe-4S]-[ferredoxin] + oxalate = reduced 2[4Fe-4S]-[ferredoxin] + 2 CO2. Catalyzes the anaerobic oxidation of oxalate using a broad range of electron acceptors, including ferredoxin and the nickel-dependent carbon monoxide dehydrogenase. Does not require coenzyme A as cosubstrate. Enables anaerobic growth on oxalate which is used as energy source by the bacteria. The protein is Oxalate oxidoreductase subunit delta of Moorella thermoacetica (strain ATCC 39073 / JCM 9320).